The primary structure comprises 260 residues: Ribosomal RNA small subunit methyltransferase J (260 aa).

Residues 125 to 126 (ER) and aspartate 179 contribute to the S-adenosyl-L-methionine site.

This sequence belongs to the methyltransferase superfamily. RsmJ family.

The protein localises to the cytoplasm. It carries out the reaction guanosine(1516) in 16S rRNA + S-adenosyl-L-methionine = N(2)-methylguanosine(1516) in 16S rRNA + S-adenosyl-L-homocysteine + H(+). Functionally, specifically methylates the guanosine in position 1516 of 16S rRNA. The protein is Ribosomal RNA small subunit methyltransferase J of Pseudomonas fluorescens (strain ATCC BAA-477 / NRRL B-23932 / Pf-5).